The primary structure comprises 219 residues: 2,5-diamino-6-ribosylamino-4(3H)-pyrimidinone 5'-phosphate reductase (219 aa).

Residues Thr52, Asp56, 87 to 90, Val134, and 156 to 159 contribute to the NADP(+) site; these read SRCR and GGTL.

This sequence belongs to the HTP reductase family. Homodimer.

It carries out the reaction 2,5-diamino-6-(1-D-ribitylamino)pyrimidin-4(3H)-one 5'-phosphate + NADP(+) = 2,5-diamino-6-(1-D-ribosylamino)pyrimidin-4(3H)-one 5'-phosphate + NADPH + H(+). The catalysed reaction is 2,5-diamino-6-(1-D-ribitylamino)pyrimidin-4(3H)-one 5'-phosphate + NAD(+) = 2,5-diamino-6-(1-D-ribosylamino)pyrimidin-4(3H)-one 5'-phosphate + NADH + H(+). Its pathway is cofactor biosynthesis; riboflavin biosynthesis. In terms of biological role, catalyzes an early step in riboflavin biosynthesis, the NADPH-dependent reduction of the ribose side chain of 2,5-diamino-6-ribosylamino-4(3H)-pyrimidinone 5'-phosphate, yielding 2,5-diamino-6-ribitylamino-4(3H)-pyrimidinone 5'-phosphate. The polypeptide is 2,5-diamino-6-ribosylamino-4(3H)-pyrimidinone 5'-phosphate reductase (Archaeoglobus fulgidus (strain ATCC 49558 / DSM 4304 / JCM 9628 / NBRC 100126 / VC-16)).